The sequence spans 335 residues: UPF0353 protein BCG_1543 (335 aa).

2 helical membrane-spanning segments follow: residues 18–38 (WFFLFLFVVAGLVALYILMQL) and 67–87 (VPAILLVLSLLLFTIAMAGPT). The VWFA domain maps to 98–294 (VVMLVIDVSQ…AELRAVYSSL (197 aa)). Residues 309-329 (VGWLRLGALALALAALAALLI) traverse the membrane as a helical segment.

Belongs to the UPF0353 family.

The protein resides in the cell membrane. The polypeptide is UPF0353 protein BCG_1543 (Mycobacterium bovis (strain BCG / Pasteur 1173P2)).